We begin with the raw amino-acid sequence, 53 residues long: Sec-independent protein translocase protein TatA (53 aa).

Residues 1–21 (MGMSLSHLLIVLLIIFVLFGA) form a helical membrane-spanning segment.

It belongs to the TatA/E family. The Tat system comprises two distinct complexes: a TatABC complex, containing multiple copies of TatA, TatB and TatC subunits, and a separate TatA complex, containing only TatA subunits. Substrates initially bind to the TatABC complex, which probably triggers association of the separate TatA complex to form the active translocon.

It localises to the cell inner membrane. In terms of biological role, part of the twin-arginine translocation (Tat) system that transports large folded proteins containing a characteristic twin-arginine motif in their signal peptide across membranes. TatA could form the protein-conducting channel of the Tat system. The polypeptide is Sec-independent protein translocase protein TatA (Rickettsia conorii (strain ATCC VR-613 / Malish 7)).